The chain runs to 871 residues: DNA mismatch repair protein MutS (871 aa).

Position 605 to 612 (605 to 612 (GPNMGGKS)) interacts with ATP. The tract at residues 791–840 (PQRPTSASVEQPVDSAKTETAATAEEPQQLSLFPTDEETKPKQPTKKERS) is disordered. Basic and acidic residues predominate over residues 827–840 (EETKPKQPTKKERS).

It belongs to the DNA mismatch repair MutS family.

In terms of biological role, this protein is involved in the repair of mismatches in DNA. It is possible that it carries out the mismatch recognition step. This protein has a weak ATPase activity. The sequence is that of DNA mismatch repair protein MutS from Shouchella clausii (strain KSM-K16) (Alkalihalobacillus clausii).